Consider the following 420-residue polypeptide: Tyrosine--tRNA ligase (420 aa).

Tyr36 serves as a coordination point for L-tyrosine. The 'HIGH' region motif lies at 41–50 (PTADSMHIGH). Residues Tyr170 and Gln174 each contribute to the L-tyrosine site. A 'KMSKS' region motif is present at residues 231-235 (KFGKS). Position 234 (Lys234) interacts with ATP. One can recognise an S4 RNA-binding domain in the interval 353-420 (TNIVDFIVEA…KKKYFMVKYK (68 aa)).

This sequence belongs to the class-I aminoacyl-tRNA synthetase family. TyrS type 1 subfamily. Homodimer.

Its subcellular location is the cytoplasm. It carries out the reaction tRNA(Tyr) + L-tyrosine + ATP = L-tyrosyl-tRNA(Tyr) + AMP + diphosphate + H(+). Functionally, catalyzes the attachment of tyrosine to tRNA(Tyr) in a two-step reaction: tyrosine is first activated by ATP to form Tyr-AMP and then transferred to the acceptor end of tRNA(Tyr). This chain is Tyrosine--tRNA ligase, found in Staphylococcus carnosus (strain TM300).